A 523-amino-acid polypeptide reads, in one-letter code: MSPAGCSHVNSFKVENWKQNLRVIYQCFVWSGTPETRKRKAKSCICHMCGAHLNRLHSCLYCVFFGCFTKKHIHEHAKNKRHNLAIDLLYGGIYCFMCQDYIYDKDMEQVAKEEQRKAWKLQVFSPALVSPYQYTMTGVGEKYSTWEPTKRELELLQHNPKRRKITTNCTIGLRGLINLGNTCFMNCIVQALTHTPLLRDFFLSDRHKCEMQSPNSCLVCEMSTLFQEFYSGHRSPHIPYRLLHLVWTHARHLAGYEQQDAHEFLIAALDVLHRHCKGDDNGKKANNPNHCNCIIDQIFTGGLQSDVTCQVCHGVSTTIDPFWDISLDLPGSSTPFWPLSPGSDAGVVNGESHVSGTTTLTDCLRRFTRPEHLGSSAKIKCSGCHSYQESTKQLTMKKLPIVACFHLKRFEHSAKLRRKITTYVSFPLELDMTPFMASSKESRMNGQYQQPSDSLHNDNKYSLFAVVNHQGTLESGHYTSFIRQHKDQWFKCDDAIITKASIKDVLDSEGYLLFYHKQFLEYE.

The UBP-type zinc-finger motif lies at 4–121; that stretch reads AGCSHVNSFK…KEEQRKAWKL (118 aa). Zn(2+)-binding residues include Cys6, His8, Cys46, Cys49, Cys59, Cys62, Cys67, His72, His76, His82, Cys95, and Cys98. Positions 174–518 constitute a USP domain; it reads RGLINLGNTC…EGYLLFYHKQ (345 aa). The active-site Nucleophile is Cys183. The Proton acceptor role is filled by His477.

Belongs to the peptidase C19 family. UBP8 subfamily. In terms of assembly, component of some SAGA transcription coactivator-HAT complexes.

It localises to the nucleus. It catalyses the reaction Thiol-dependent hydrolysis of ester, thioester, amide, peptide and isopeptide bonds formed by the C-terminal Gly of ubiquitin (a 76-residue protein attached to proteins as an intracellular targeting signal).. In terms of biological role, histone deubiquitinating component of the transcription regulatory histone acetylation (HAT) complex SAGA. Catalyzes the deubiquitination of both histones H2A and H2B, thereby acting as a coactivator. Recruited to specific gene promoters by activators, where it is required for transcription. The protein is Ubiquitin carboxyl-terminal hydrolase 22-A (usp22-a) of Xenopus laevis (African clawed frog).